Consider the following 343-residue polypeptide: Phosphate acyltransferase (343 aa).

This sequence belongs to the PlsX family. As to quaternary structure, homodimer. Probably interacts with PlsY.

The protein resides in the cytoplasm. It carries out the reaction a fatty acyl-[ACP] + phosphate = an acyl phosphate + holo-[ACP]. The protein operates within lipid metabolism; phospholipid metabolism. Catalyzes the reversible formation of acyl-phosphate (acyl-PO(4)) from acyl-[acyl-carrier-protein] (acyl-ACP). This enzyme utilizes acyl-ACP as fatty acyl donor, but not acyl-CoA. This Coxiella burnetii (strain CbuG_Q212) (Coxiella burnetii (strain Q212)) protein is Phosphate acyltransferase.